Consider the following 198-residue polypeptide: MSSIELLIIAVGLSMDAFAVAICKGLSMKKMSYRNAVLTGCFFGGFQALMPLLGYLLGTQFKDYITSIDHWIAFGLLSLIGINMIKESKNTCEITDEDDTFSLKSLTVMAFATSIDALAIGVTFAFLQVNIIPAVTMIGITTFTFSFLGVKIGNLFGVKFQSKAEIVGGLILIGMGCKILFDHLGVISFVFDSLNKFN.

The next 6 membrane-spanning stretches (helical) occupy residues 3–23, 37–57, 65–85, 105–127, 131–153, and 171–191; these read SIELLIIAVGLSMDAFAVAIC, VLTGCFFGGFQALMPLLGYLL, ITSIDHWIAFGLLSLIGINMI, SLTVMAFATSIDALAIGVTFAFL, IIPAVTMIGITTFTFSFLGVKIG, and ILIGMGCKILFDHLGVISFVF.

It belongs to the MntP (TC 9.B.29) family.

Its subcellular location is the cell membrane. Its function is as follows. Probably functions as a manganese efflux pump. The chain is Putative manganese efflux pump MntP from Acetivibrio thermocellus (strain ATCC 27405 / DSM 1237 / JCM 9322 / NBRC 103400 / NCIMB 10682 / NRRL B-4536 / VPI 7372) (Clostridium thermocellum).